A 409-amino-acid chain; its full sequence is DEP domain-containing mTOR-interacting protein (409 aa).

At M1 the chain carries N-acetylmethionine. Positions M1–R25 are disordered. DEP domains lie at T36–K119 and S145–M219. Residues F217–S235 carry the DDEX motif motif. Position 235 is a phosphoserine; by MAPK3 (S235). A Phosphothreonine modification is found at T241. A phosphoserine mark is found at S244 and S258. A Phosphothreonine modification is found at T259. Phosphoserine occurs at positions 263, 265, 280, 282, and 283. Residues S286 and S287 each carry the phosphoserine; by CK1 modification. Positions S286–S291 match the BetaTrCP degron motif motif. At Y289 the chain carries Phosphotyrosine; by SYK. A Phosphoserine; by CK1 modification is found at S291. At S293 the chain carries Phosphoserine; by MTOR. Residue T295 is modified to Phosphothreonine; by MTOR. S297 and S298 each carry phosphoserine. A Phosphoserine; by MTOR modification is found at S299. In terms of domain architecture, PDZ spans T330–L407.

Associated component of the mechanistic target of rapamycin complex 1 (mTORC1) which contains MTOR, MLST8 and RPTOR. Associated component of the mechanistic target of rapamycin complex 2 (mTORC2) which contains MTOR, MLST8, PROTOR1, RICTOR, MAPKAP1 and DEPTOR. Interacts (via PDZ domain) with MTOR; interacts with MTOR within both mTORC1 and mTORC2. Interacts (via PDZ domain) with MINAR1 (via N-terminus). Interacts with SIK3. Post-translationally, phosphorylation weakens interaction with MTOR within mTORC1 and mTORC2. Phosphorylated at Ser-286, Ser-287 and Ser-291 in response to mitogenic stimulation by MTOR: DEPTOR is either directly phosphorylated by MTOR or indirectly via proteins kinases that are activated by MTOR, such as CK1/CSNK1A1. Phosphorylation at Ser-286, Ser-287 and Ser-291 promotes ubiquitination by the SCF(BTRC) complex, followed by degradation. Phosphorylation at Ser-235 by MAPK3/ERK1 promotes deubiquitination by USP7, enhancing its stability. Phosphorylation at Tyr-289 by SYK impairs its interaction with MTOR, promoting mTORC1 and mTORC2 signaling. Ubiquitinated; leading to proteasomal degradation. Ubiquitination by the SCF(BTRC) and SCF(FBXW11) complexes following phosphorylation at Ser-286, Ser-287 and Ser-291 by MTOR, leads to its degradation by the proteasome. Deubiquitinated by OTUB1 in response to amino acid via a non-canonical mechanism, leading to DEPTOR stability. Deubiquitinated by USP7 following phosphorylation at Ser-235, promoting its stability.

The protein localises to the lysosome membrane. Inhibited upon phosphatidic acid-binding: phosphatidic acid produced upon mitogenic stimulation promotes DEPTOR dissociatiom from the mTORC1 and mTORC2 complexes, leading to their activation. Specifically binds unsaturated phosphatidic acid, such as 16:0-18:1, 18:0-18:1 and di-18:1. Inhibited when nutrients are present via a feedback loop: phosphorylation by MTOR promotes DEPTOR ubiquitination and degradation. Functionally, negative regulator of the mTORC1 and mTORC2 complexes: inhibits the protein kinase activity of MTOR, thereby inactivating both complexes. DEPTOR inhibits mTORC1 and mTORC2 to induce autophagy. In contrast to AKT1S1/PRAS40, only partially inhibits mTORC1 activity. The sequence is that of DEP domain-containing mTOR-interacting protein from Homo sapiens (Human).